The primary structure comprises 878 residues: DNA mismatch repair protein MutS (878 aa).

Residue 629 to 636 (GPNMAGKS) participates in ATP binding.

It belongs to the DNA mismatch repair MutS family.

Its function is as follows. This protein is involved in the repair of mismatches in DNA. It is possible that it carries out the mismatch recognition step. This protein has a weak ATPase activity. The sequence is that of DNA mismatch repair protein MutS from Roseobacter denitrificans (strain ATCC 33942 / OCh 114) (Erythrobacter sp. (strain OCh 114)).